The chain runs to 358 residues: Dihydroorotate dehydrogenase (quinone) (358 aa).

FMN-binding positions include 61 to 65 (AGFDK) and Gly-85. Lys-65 provides a ligand contact to substrate. Substrate is bound at residue 110-114 (NRFGL). 2 residues coordinate FMN: Asn-139 and Asn-170. Asn-170 is a substrate binding site. Ser-173 serves as the catalytic Nucleophile. A substrate-binding site is contributed by Asn-175. Residues Lys-211 and Ser-239 each coordinate FMN. Residue 240–241 (NT) participates in substrate binding. Residues Gly-263, Gly-292, and 313-314 (YS) contribute to the FMN site.

This sequence belongs to the dihydroorotate dehydrogenase family. Type 2 subfamily. In terms of assembly, monomer. It depends on FMN as a cofactor.

The protein localises to the cell membrane. The catalysed reaction is (S)-dihydroorotate + a quinone = orotate + a quinol. Its pathway is pyrimidine metabolism; UMP biosynthesis via de novo pathway; orotate from (S)-dihydroorotate (quinone route): step 1/1. Catalyzes the conversion of dihydroorotate to orotate with quinone as electron acceptor. The protein is Dihydroorotate dehydrogenase (quinone) of Methylorubrum extorquens (strain CM4 / NCIMB 13688) (Methylobacterium extorquens).